The chain runs to 367 residues: Alginate lyase (367 aa).

Residues 1 to 27 (MKTSHLIRIALPGALAAALLASQVSQA) form the signal peptide. Substrate contacts are provided by residues 65-66 (SK), 138-139 (HT), and Tyr-256.

The protein belongs to the polysaccharide lyase 5 family.

The protein localises to the periplasm. It carries out the reaction Eliminative cleavage of alginate to give oligosaccharides with 4-deoxy-alpha-L-erythro-hex-4-enuronosyl groups at their non-reducing ends and beta-D-mannuronate at their reducing end.. Its function is as follows. Catalyzes the depolymerization of alginate by cleaving the beta-1,4 glycosidic bond between two adjacent sugar residues via a beta-elimination mechanism. May serve to degrade mislocalized alginate that is trapped in the periplasmic space. Acts preferentially on non-acetylated alginate or its precursor mannuronan. Is able to catalyze cleavage adjacent to either mannuronate or guluronate residues in alginate. Exhaustive digestion of alginate by AlgL generates dimeric and trimeric products. In addition to its enzymatic function, AlgL appears to be required for alginate export, maybe as part of a multi-protein alginate-secretion complex. The protein is Alginate lyase of Pseudomonas aeruginosa (strain ATCC 15692 / DSM 22644 / CIP 104116 / JCM 14847 / LMG 12228 / 1C / PRS 101 / PAO1).